A 347-amino-acid chain; its full sequence is Probable cytosolic iron-sulfur protein assembly protein 1 (347 aa).

WD repeat units lie at residues 11–48, 62–101, 122–161, 168–207, 212–255, 266–304, and 311–347; these read LHNE…DGLV, SHKK…GDAD, GHEN…EEYE, EHSQ…WEAA, GHEG…SIEE, VHGK…VWEV, and SHSI…WAYN.

The protein belongs to the WD repeat CIA1 family. In terms of assembly, interacts with NAR1.

The protein resides in the cytoplasm. The protein localises to the nucleus. Its function is as follows. Essential component of the cytosolic iron-sulfur (Fe/S) protein assembly machinery. Required for the maturation of extramitochondrial Fe/S proteins. In Vanderwaltozyma polyspora (strain ATCC 22028 / DSM 70294 / BCRC 21397 / CBS 2163 / NBRC 10782 / NRRL Y-8283 / UCD 57-17) (Kluyveromyces polysporus), this protein is Probable cytosolic iron-sulfur protein assembly protein 1.